The following is a 485-amino-acid chain: NADH-quinone oxidoreductase subunit N (485 aa).

A run of 14 helical transmembrane segments spans residues 8-28 (LIAL…MLSI), 35-55 (FLNA…LWFV), 71-91 (GFAM…CTFA), 105-125 (FYLL…ANHL), 127-147 (ALFL…GYAF), 159-179 (YTIL…LVYA), 203-223 (LLAG…LVPF), 235-255 (PAPV…GVVM), 271-291 (VVLG…ALSQ), 297-317 (LLGY…IALQ), 326-346 (VGVY…VVSL), 373-393 (AAVM…LGFI), 408-430 (WWLV…RVAV), and 455-475 (IVVL…QPLI).

This sequence belongs to the complex I subunit 2 family. In terms of assembly, NDH-1 is composed of 13 different subunits. Subunits NuoA, H, J, K, L, M, N constitute the membrane sector of the complex.

It localises to the cell inner membrane. The enzyme catalyses a quinone + NADH + 5 H(+)(in) = a quinol + NAD(+) + 4 H(+)(out). Its function is as follows. NDH-1 shuttles electrons from NADH, via FMN and iron-sulfur (Fe-S) centers, to quinones in the respiratory chain. The immediate electron acceptor for the enzyme in this species is believed to be ubiquinone. Couples the redox reaction to proton translocation (for every two electrons transferred, four hydrogen ions are translocated across the cytoplasmic membrane), and thus conserves the redox energy in a proton gradient. This Salmonella gallinarum (strain 287/91 / NCTC 13346) protein is NADH-quinone oxidoreductase subunit N.